A 451-amino-acid polypeptide reads, in one-letter code: Exodeoxyribonuclease 7 large subunit (451 aa).

It belongs to the XseA family. Heterooligomer composed of large and small subunits.

It is found in the cytoplasm. It carries out the reaction Exonucleolytic cleavage in either 5'- to 3'- or 3'- to 5'-direction to yield nucleoside 5'-phosphates.. In terms of biological role, bidirectionally degrades single-stranded DNA into large acid-insoluble oligonucleotides, which are then degraded further into small acid-soluble oligonucleotides. The sequence is that of Exodeoxyribonuclease 7 large subunit from Bacillus cytotoxicus (strain DSM 22905 / CIP 110041 / 391-98 / NVH 391-98).